A 31-amino-acid chain; its full sequence is Maltose/maltodextrin import ATP-binding protein MalK (31 aa).

This sequence belongs to the ABC transporter superfamily. Maltooligosaccharide importer (TC 3.A.1.1.1) family. In terms of assembly, the complex is composed of two ATP-binding proteins (MalK), two transmembrane proteins (MalG and MalK) and a solute-binding protein (MalE).

It localises to the cell inner membrane. It catalyses the reaction D-maltose(out) + ATP + H2O = D-maltose(in) + ADP + phosphate + H(+). In terms of biological role, part of the ABC transporter complex MalEFGK involved in maltose/maltodextrin import. Responsible for energy coupling to the transport system. The protein is Maltose/maltodextrin import ATP-binding protein MalK of Photorhabdus luminescens (Xenorhabdus luminescens).